A 156-amino-acid polypeptide reads, in one-letter code: Small ribosomal subunit protein uS7 (156 aa).

This sequence belongs to the universal ribosomal protein uS7 family. As to quaternary structure, part of the 30S ribosomal subunit. Contacts proteins S9 and S11.

One of the primary rRNA binding proteins, it binds directly to 16S rRNA where it nucleates assembly of the head domain of the 30S subunit. Is located at the subunit interface close to the decoding center, probably blocks exit of the E-site tRNA. This chain is Small ribosomal subunit protein uS7, found in Synechocystis sp. (strain ATCC 27184 / PCC 6803 / Kazusa).